Here is a 580-residue protein sequence, read N- to C-terminus: 2-succinyl-5-enolpyruvyl-6-hydroxy-3-cyclohexene-1-carboxylate synthase (580 aa).

This sequence belongs to the TPP enzyme family. MenD subfamily. Homodimer. It depends on Mg(2+) as a cofactor. The cofactor is Mn(2+). Thiamine diphosphate is required as a cofactor.

It catalyses the reaction isochorismate + 2-oxoglutarate + H(+) = 5-enolpyruvoyl-6-hydroxy-2-succinyl-cyclohex-3-ene-1-carboxylate + CO2. It participates in quinol/quinone metabolism; 1,4-dihydroxy-2-naphthoate biosynthesis; 1,4-dihydroxy-2-naphthoate from chorismate: step 2/7. Its pathway is quinol/quinone metabolism; menaquinone biosynthesis. Catalyzes the thiamine diphosphate-dependent decarboxylation of 2-oxoglutarate and the subsequent addition of the resulting succinic semialdehyde-thiamine pyrophosphate anion to isochorismate to yield 2-succinyl-5-enolpyruvyl-6-hydroxy-3-cyclohexene-1-carboxylate (SEPHCHC). This is 2-succinyl-5-enolpyruvyl-6-hydroxy-3-cyclohexene-1-carboxylate synthase from Listeria monocytogenes serotype 4b (strain F2365).